Here is a 757-residue protein sequence, read N- to C-terminus: LPS-assembly protein LptD (757 aa).

The first 21 residues, 1–21, serve as a signal peptide directing secretion; it reads MRRLIPIAITGSLLWGAAVQA.

Belongs to the LptD family. Component of the lipopolysaccharide transport and assembly complex. Interacts with LptE and LptA.

Its subcellular location is the cell outer membrane. Together with LptE, is involved in the assembly of lipopolysaccharide (LPS) at the surface of the outer membrane. This chain is LPS-assembly protein LptD, found in Alkalilimnicola ehrlichii (strain ATCC BAA-1101 / DSM 17681 / MLHE-1).